The sequence spans 592 residues: Autophagy-related protein 22-1 (592 aa).

Transmembrane regions (helical) follow at residues 31–51 (YGWA…PITL), 108–128 (TASF…VIII), 143–163 (LLIV…VVVP), and 167–187 (LLGG…FVLL). N-linked (GlcNAc...) asparagine glycosylation occurs at asparagine 213. A run of 8 helical transmembrane segments spans residues 271–291 (IGIG…VVVV), 301–321 (LVLF…SLWL), 364–384 (IVIF…VSGT), 398–418 (AALG…AFSW), 433–453 (IIAC…GFIP), 468–490 (MYPL…RSFF), 502–524 (FYAL…VGAI), and 534–554 (AFVF…LVDV). The segment at 572–592 (PQGSEYGAISDDQTTEDPIEE) is disordered.

The protein belongs to the ATG22 family.

The protein resides in the vacuole membrane. Functionally, vacuolar effluxer which mediate the efflux of amino acids resulting from autophagic degradation. The release of autophagic amino acids allows the maintenance of protein synthesis and viability during nitrogen starvation. This Penicillium rubens (strain ATCC 28089 / DSM 1075 / NRRL 1951 / Wisconsin 54-1255) (Penicillium chrysogenum) protein is Autophagy-related protein 22-1 (atg22-1).